A 453-amino-acid polypeptide reads, in one-letter code: Protein LIAT1 (453 aa).

Residues 1–152 form a disordered region; sequence METRGPGLAV…HLPSDSSTVS (152 aa). Positions 82–103 are lysine-rich domain; sequence KRKVKKKKRKKKTKGSGKGDDK. A compositionally biased stretch (basic residues) spans 83-96; sequence RKVKKKKRKKKTKG. The segment covering 106-117 has biased composition (low complexity); the sequence is SQSLKSQPLSSS. Residues 125–145 show a composition bias toward basic and acidic residues; that stretch reads CKERGPKPEHRQSKVEKKHLP. Residues 145-197 are interaction with ATE1; that stretch reads PSDSSTVSLPDFAEIENLANRINESLRWDGILADPEAEKERIRIYKLNRRKRY. 20 consecutive repeat copies span residues 201–210, 211–220, 221–230, 231–240, 241–250, 251–260, 261–270, 271–280, 281–290, 291–300, 301–310, 311–320, 321–330, 331–340, 341–350, 351–360, 361–370, 371–380, 381–390, and 391–400. A 20 X 10 AA approximate tandem repeat of A-L-K-G-F-H-P-D-P-E region spans residues 201 to 400; it reads ALKGFHPDPE…ALKGFHTDPN (200 aa). Disordered stretches follow at residues 225–306 and 320–432; these read FHPD…KGFH and EALK…CPNL. Residues 320–396 are compositionally biased toward basic and acidic residues; sequence EALKGFHPDP…PDPEALKGFH (77 aa).

In terms of assembly, self-associates (via Lys-rich domain); targets LIAT1 to the nucleolus. Interacts with ATE1; it is not a substrate of ATE1, the interaction takes place in the cytoplasm and seems to increase ATE1 arginyltransferase activity. Interacts with JMJD6 and MRPS14. In terms of processing, post-translationally modified by JMJD6 lysyl-hydroxylase activity at its Lys-rich domain, which inhibits its self-association and nucleolar localization.

It is found in the nucleus. The protein localises to the nucleolus. The protein resides in the cytoplasm. Its function is as follows. Participates in nucleolar liquid-liquid phase separation (LLPS) through its N-terminal intrinsically disordered region (IDR). May be involved in ATE1-mediated N-terminal arginylation. This Homo sapiens (Human) protein is Protein LIAT1.